We begin with the raw amino-acid sequence, 913 residues long: MDRGISAVRKAMAPLLEYERQLVLELLDSDGLVVCARGLGADRLLYHFLRLHCHPACLVLVLNTQPAEEEYFINQLKIEGVEHLPRRVTNEITSNSRYEVYTQGGIIFATSRILVVDFLTDRIPSDLITGILVYRAHRIIESCQEAFILRLFRQKNKRGFIKAFTDNAVAFDTGFCHVERVMRNLFVRKLYLWPRFHVAVNSFLEQHKPEVVEIHVSMTPAMLSIQTAILDILNACLKELKCHNPSLEVEDLSLENALGKPFDKTIRHYLDPLWHQLGAKTKSLVQDLKILRTLLQYLSQYDCVTFLNLLESLRATEKVFGQNSGWLFLDASTSMFVNARARVYRVPDVKLNKKAKMSESAEGQETKKELVLESNPKWEALSEVLKEIEAENKESEALGGPGQVLICASDDRTCCQLRDYLTAGAEAFLLRLYRKTFEKDSKAEEVWVNLRKGDGPKRTMKSDKRPKDTKNKERASTKKGAPKRKKRELTLTQVMGTAEEPPEEGAAEEDQQRQATSSPEGCGGEIQHEAFDLNLSSDSAYGILKEPLTIIHPLVGCSDPYALTRVLHEVEPRYVVLYDAELTFVRQLEIYRASRPGKPLRVYFLIYGGSTEEQRYLTALRKEKEAFEKLIREKASMVVPEEREGRDETNLDLARGTVSTDAPADTRKAGGQEHNGTQPSIVVDMREFRSELPSLIHRRGIDIEPVTLEVGDYILTPELCVERKSVSDLIGSLNSGRLYSQCLAMSRYYRRPVLLIEFDAGKPFSLAPRGSFFQEMSSSDVSSKLTLLTLHFPRLRLLWCPSPHATAELFEELKQNKPQPDAATAMAITADSETLPESDKYNPGPQDFVLKMPGINAKNCHSLMNHVKNIAELASLSQERLTSILGHAGNAKQLYDFLHTAYADVVSGGRVRK.

The tract at residues 1–454 is helicase-like; sequence MDRGISAVRK…EVWVNLRKGD (454 aa). Leucine-zipper stretches follow at residues 233–254 and 270–298; these read LNACLKELKCHNPSLEVEDLSL and LDPLWHQLGAKTKSLVQDLKILRTLLQYL. At K289 the chain carries N6-acetyllysine. Basic and acidic residues predominate over residues 453–476; sequence GDGPKRTMKSDKRPKDTKNKERAS. Disordered stretches follow at residues 453–525 and 638–677; these read GDGP…CGGE and VVPEEREGRDETNLDLARGTVSTDAPADTRKAGGQEHNGT. The Nuclear localization signal signature appears at 483 to 488; the sequence is KRKKRE. A compositionally biased stretch (acidic residues) spans 500 to 509; that stretch reads EPPEEGAAEE. Phosphoserine is present on S518. A compositionally biased stretch (basic and acidic residues) spans 638–649; the sequence is VVPEEREGRDET. The segment at 655-810 is nuclease; that stretch reads RGTVSTDAPA…PSPHATAELF (156 aa). The 81-residue stretch at 680-760 folds into the ERCC4 domain; the sequence is SIVVDMREFR…RPVLLIEFDA (81 aa). The tract at residues 834–902 is hhH2, dimerization with ERCC1; the sequence is TLPESDKYNP…QLYDFLHTAY (69 aa).

The protein belongs to the XPF family. In terms of assembly, heterodimer composed of ERCC1 and ERCC4/XPF. Interacts with SLX4/BTBD12; this interaction is direct and links the ERCC1-ERCC4/XPF complex to SLX4, which may coordinate the action of the structure-specific endonuclease during DNA repair. It depends on Mg(2+) as a cofactor.

It localises to the nucleus. It is found in the chromosome. Its function is as follows. Catalytic component of a structure-specific DNA repair endonuclease responsible for the 5-prime incision during DNA repair, and which is essential for nucleotide excision repair (NER) and interstrand cross-link (ICL) repair. This chain is DNA repair endonuclease XPF, found in Cricetulus griseus (Chinese hamster).